Here is a 452-residue protein sequence, read N- to C-terminus: MSLFTHVLACLFGIGSWVAINGMWVELPLIVTAIPEGWLLPSYLTIIIQMANIGPLFITLMHRFRPGVLDERPVIYTIVAVGVVATFLLAFLWKHTLTFGDGEHSAALLSLSFLLSVVDCTSSVTFLPFMMRLQPQYLTTYFIGEGLSGLVPALVALVQGVGVVHCKNASANANFSLGNISQSLLETHYQPANFSTQGFFLFLSAMMMVCLGAFLLLNLHPAVAREHKSMKGYIDDSRRVEKIDLSQSPNDETPEQRPMLDFPEGSAIKQRSSFGKGTYSRTELVFIFVVLAWVNALTNAVLPSVQSYSCLPYGNQAYHLAATLSSVANPVACFIAMFVPIRSLVLMGVLTVTGTGFGAYIMAMAALSPCPLLINDDLGAALIVITWVIFVLSLSYVKVIIGVILRDEGHSALVWCGAVVQLGSMLGALSMFPLISVYRLFQSGDPCNTKCP.

5 helical membrane-spanning segments follow: residues 11 to 31, 38 to 58, 73 to 93, 111 to 131, and 138 to 158; these read LFGI…PLIV, WLLP…PLFI, PVIY…AFLW, LSFL…PFMM, and LTTY…VALV. N168, N174, N179, and N193 each carry an N-linked (GlcNAc...) asparagine glycan. The next 6 helical transmembrane spans lie at 199 to 219, 285 to 305, 321 to 341, 344 to 364, 381 to 401, and 412 to 432; these read FFLF…LLNL, VFIF…LPSV, AATL…FVPI, LVLM…IMAM, ALIV…KVII, and ALVW…LSMF.

Belongs to the riboflavin transporter family.

The protein localises to the cell membrane. The catalysed reaction is riboflavin(in) = riboflavin(out). Its function is as follows. Plasma membrane transporter mediating the uptake by cells of the water soluble vitamin B2/riboflavin that plays a key role in biochemical oxidation-reduction reactions of the carbohydrate, lipid, and amino acid metabolism. The protein is Solute carrier family 52, riboflavin transporter, member 3-B (slc52a3b) of Danio rerio (Zebrafish).